The following is a 387-amino-acid chain: Succinate--CoA ligase [ADP-forming] subunit beta (387 aa).

Residues 9-236 enclose the ATP-grasp domain; that stretch reads KELFAKHNVP…RDATDPLELK (228 aa). Residues lysine 45, 52-54, serine 94, and glutamate 99 each bind ATP; that span reads GRG. Mg(2+) contacts are provided by asparagine 191 and aspartate 205. Residues asparagine 256 and 318–320 contribute to the substrate site; that span reads GIT.

It belongs to the succinate/malate CoA ligase beta subunit family. As to quaternary structure, heterotetramer of two alpha and two beta subunits. Mg(2+) is required as a cofactor.

The enzyme catalyses succinate + ATP + CoA = succinyl-CoA + ADP + phosphate. It catalyses the reaction GTP + succinate + CoA = succinyl-CoA + GDP + phosphate. Its pathway is carbohydrate metabolism; tricarboxylic acid cycle; succinate from succinyl-CoA (ligase route): step 1/1. In terms of biological role, succinyl-CoA synthetase functions in the citric acid cycle (TCA), coupling the hydrolysis of succinyl-CoA to the synthesis of either ATP or GTP and thus represents the only step of substrate-level phosphorylation in the TCA. The beta subunit provides nucleotide specificity of the enzyme and binds the substrate succinate, while the binding sites for coenzyme A and phosphate are found in the alpha subunit. The polypeptide is Succinate--CoA ligase [ADP-forming] subunit beta (Mycolicibacterium smegmatis (strain ATCC 700084 / mc(2)155) (Mycobacterium smegmatis)).